The chain runs to 61 residues: Beta-toxin Tce4 (61 aa).

In terms of domain architecture, LCN-type CS-alpha/beta spans 1 to 61 (KEGYLMDHEG…KVWEYATNRC (61 aa)). 4 disulfide bridges follow: C11/C61, C15/C37, C23/C42, and C27/C44. A Cysteine amide modification is found at C61.

This sequence belongs to the long (4 C-C) scorpion toxin superfamily. Sodium channel inhibitor family. Beta subfamily. As to expression, expressed by the venom gland.

The protein resides in the secreted. Beta toxins bind voltage-independently at site-4 of sodium channels (Nav) and shift the voltage of activation toward more negative potentials thereby affecting sodium channel activation and promoting spontaneous and repetitive firing. The protein is Beta-toxin Tce4 of Tityus cerroazul (Scorpion).